The sequence spans 310 residues: Methionyl-tRNA formyltransferase (310 aa).

(6S)-5,6,7,8-tetrahydrofolate is bound at residue 109-112 (SLLP).

Belongs to the Fmt family.

It catalyses the reaction L-methionyl-tRNA(fMet) + (6R)-10-formyltetrahydrofolate = N-formyl-L-methionyl-tRNA(fMet) + (6S)-5,6,7,8-tetrahydrofolate + H(+). In terms of biological role, attaches a formyl group to the free amino group of methionyl-tRNA(fMet). The formyl group appears to play a dual role in the initiator identity of N-formylmethionyl-tRNA by promoting its recognition by IF2 and preventing the misappropriation of this tRNA by the elongation apparatus. This chain is Methionyl-tRNA formyltransferase, found in Agathobacter rectalis (strain ATCC 33656 / DSM 3377 / JCM 17463 / KCTC 5835 / VPI 0990) (Eubacterium rectale).